The following is a 278-amino-acid chain: Polyamine aminopropyltransferase (278 aa).

Residues 5 to 238 (ELWFTEQQTP…GLWSFTMGSK (234 aa)) enclose the PABS domain. Gln34 contributes to the S-methyl-5'-thioadenosine binding site. Spermidine-binding residues include His65 and Asp89. S-methyl-5'-thioadenosine contacts are provided by residues Glu109 and 140–141 (DG). Asp158 serves as the catalytic Proton acceptor. 158–161 (DSTD) is a binding site for spermidine. Pro165 provides a ligand contact to S-methyl-5'-thioadenosine.

The protein belongs to the spermidine/spermine synthase family. Homodimer or homotetramer.

The protein localises to the cytoplasm. It carries out the reaction S-adenosyl 3-(methylsulfanyl)propylamine + putrescine = S-methyl-5'-thioadenosine + spermidine + H(+). It participates in amine and polyamine biosynthesis; spermidine biosynthesis; spermidine from putrescine: step 1/1. Catalyzes the irreversible transfer of a propylamine group from the amino donor S-adenosylmethioninamine (decarboxy-AdoMet) to putrescine (1,4-diaminobutane) to yield spermidine. This is Polyamine aminopropyltransferase from Caldicellulosiruptor saccharolyticus (strain ATCC 43494 / DSM 8903 / Tp8T 6331).